A 318-amino-acid chain; its full sequence is HPr kinase/phosphorylase (318 aa).

Residues His146 and Lys167 contribute to the active site. 161–168 (GESGLGKS) serves as a coordination point for ATP. Ser168 contributes to the Mg(2+) binding site. Residue Asp185 is the Proton acceptor; for phosphorylation activity. Proton donor; for dephosphorylation activity of the active site. Residues 209-218 (LEVRGIGLLD) form an important for the catalytic mechanism of both phosphorylation and dephosphorylation region. Glu210 provides a ligand contact to Mg(2+). Residue Arg252 is part of the active site. The tract at residues 273–278 (QVVAGR) is important for the catalytic mechanism of dephosphorylation.

The protein belongs to the HPrK/P family. Homohexamer. Requires Mg(2+) as cofactor.

The catalysed reaction is [HPr protein]-L-serine + ATP = [HPr protein]-O-phospho-L-serine + ADP + H(+). The enzyme catalyses [HPr protein]-O-phospho-L-serine + phosphate + H(+) = [HPr protein]-L-serine + diphosphate. Its function is as follows. Catalyzes the ATP- as well as the pyrophosphate-dependent phosphorylation of a specific serine residue in HPr, a phosphocarrier protein of the phosphoenolpyruvate-dependent sugar phosphotransferase system (PTS). HprK/P also catalyzes the pyrophosphate-producing, inorganic phosphate-dependent dephosphorylation (phosphorolysis) of seryl-phosphorylated HPr (P-Ser-HPr). The chain is HPr kinase/phosphorylase from Acidovorax sp. (strain JS42).